The sequence spans 777 residues: Semaphorin-3D (777 aa).

An N-terminal signal peptide occupies residues 1-37 (MNVTKDENPRSRSQDLHLFHAWMMLIMTVLFLPVTET). Residues 44-531 (RLKLTYKDLL…SWDGLVQLSL (488 aa)) enclose the Sema domain. Cys117 and Cys128 are oxidised to a cystine. Asn139 is a glycosylation site (N-linked (GlcNAc...) asparagine). Disulfide bonds link Cys146–Cys155, Cys286–Cys398, Cys310–Cys358, and Cys534–Cys552. The region spanning 533–585 (RCDTYGKACADCCLARDPYCAWDGNACSRYAPTSKRRARRQDVKYGDPITQCW) is the PSI domain. The Ig-like C2-type domain maps to 592 to 680 (SHETADEKVI…TFIHTIVKLT (89 aa)). Asn607 and Asn724 each carry an N-linked (GlcNAc...) asparagine glycan. A disulfide bond links Cys665 and Cys731. Residues 740–765 (RRQRNKGSPKWKHMQEMKKKRNRRHH) are compositionally biased toward basic residues. Residues 740-777 (RRQRNKGSPKWKHMQEMKKKRNRRHHRDLDELQRSVAT) form a disordered region. The span at 766–777 (RDLDELQRSVAT) shows a compositional bias: basic and acidic residues.

Belongs to the semaphorin family.

The protein resides in the secreted. In terms of biological role, induces the collapse and paralysis of neuronal growth cones. Could potentially act as repulsive cues toward specific neuronal populations. Binds to neuropilin. This Mus musculus (Mouse) protein is Semaphorin-3D (Sema3d).